A 285-amino-acid chain; its full sequence is 2-dehydro-3-deoxyphosphooctonate aldolase (285 aa).

It belongs to the KdsA family.

The protein resides in the cytoplasm. The enzyme catalyses D-arabinose 5-phosphate + phosphoenolpyruvate + H2O = 3-deoxy-alpha-D-manno-2-octulosonate-8-phosphate + phosphate. Its pathway is carbohydrate biosynthesis; 3-deoxy-D-manno-octulosonate biosynthesis; 3-deoxy-D-manno-octulosonate from D-ribulose 5-phosphate: step 2/3. It participates in bacterial outer membrane biogenesis; lipopolysaccharide biosynthesis. This Verminephrobacter eiseniae (strain EF01-2) protein is 2-dehydro-3-deoxyphosphooctonate aldolase.